Consider the following 644-residue polypeptide: Threonine--tRNA ligase (644 aa).

Positions 1–61 (MNVSIEGQML…DGTTTIEPVY (61 aa)) constitute a TGS domain. Residues 241-532 (DHRKLGQQLD…LIEQYAGAFP (292 aa)) are catalytic. Zn(2+)-binding residues include C333, H384, and H509.

This sequence belongs to the class-II aminoacyl-tRNA synthetase family. In terms of assembly, homodimer. Zn(2+) serves as cofactor.

Its subcellular location is the cytoplasm. It carries out the reaction tRNA(Thr) + L-threonine + ATP = L-threonyl-tRNA(Thr) + AMP + diphosphate + H(+). Catalyzes the attachment of threonine to tRNA(Thr) in a two-step reaction: L-threonine is first activated by ATP to form Thr-AMP and then transferred to the acceptor end of tRNA(Thr). Also edits incorrectly charged L-seryl-tRNA(Thr). This Nitratidesulfovibrio vulgaris (strain ATCC 29579 / DSM 644 / CCUG 34227 / NCIMB 8303 / VKM B-1760 / Hildenborough) (Desulfovibrio vulgaris) protein is Threonine--tRNA ligase.